We begin with the raw amino-acid sequence, 122 residues long: Large ribosomal subunit protein uL14 (122 aa).

Belongs to the universal ribosomal protein uL14 family. As to quaternary structure, part of the 50S ribosomal subunit. Forms a cluster with proteins L3 and L19. In the 70S ribosome, L14 and L19 interact and together make contacts with the 16S rRNA in bridges B5 and B8.

In terms of biological role, binds to 23S rRNA. Forms part of two intersubunit bridges in the 70S ribosome. This Polynucleobacter necessarius subsp. necessarius (strain STIR1) protein is Large ribosomal subunit protein uL14.